A 930-amino-acid chain; its full sequence is Nonribosomal peptide synthetase acyN (930 aa).

Residues 15–436 (LDPQDNKISV…AGRAKETIIV (422 aa)) are adenylation (A) domain. The region spanning 567 to 646 (APSNETEATI…GLAGTLETLM (80 aa)) is the Carrier domain. S604 carries the post-translational modification O-(pantetheine 4'-phosphoryl)serine. The tract at residues 665–914 (PLWLVHPGVG…HYTMLGPDNI (250 aa)) is thioesterase (TE) domain.

This sequence belongs to the NRP synthetase family.

It catalyses the reaction 2 3-phenylpyruvate + 2 ATP = polyporic acid + 2 AMP + 2 diphosphate + H(+). It participates in secondary metabolite biosynthesis. Its activity is regulated as follows. Hydroxyphenylpyruvate acts more like a competitive inhibitor rather than a substrate. Nonribosomal peptide synthetase that mediates the biosynthesis of polyporic acid via the condensation of 2 phenylpyruvate units. Polyporic acid is further hydroxylaed by the cytochrome P450 monooxygenase MO6277 into less toxic ascocorynin. The chain is Nonribosomal peptide synthetase acyN from Ascocoryne sarcoides (Purple jellydisc fungus).